The chain runs to 364 residues: BOLA class I histocompatibility antigen, alpha chain BL3-7 (364 aa).

Positions 1 to 27 are cleaved as a signal peptide; the sequence is MRVMRVMRPRTLLLLLSGVLVLTETLA. The alpha-1 stretch occupies residues 28-117; that stretch reads GSHSLRYFYT…LRGYYNQSET (90 aa). At 28-310 the chain is on the extracellular side; that stretch reads GSHSLRYFYT…WEPPQTSFLI (283 aa). Asparagine 113 carries an N-linked (GlcNAc...) asparagine glycan. The tract at residues 118-209 is alpha-2; the sequence is GSHNIQAMYG…ENGKDTLLRA (92 aa). 2 disulfides stabilise this stretch: cysteine 128/cysteine 191 and cysteine 230/cysteine 286. An alpha-3 region spans residues 210 to 301; the sequence is DPPKAHVTHH…GLQEPLTLRW (92 aa). Positions 212 to 298 constitute an Ig-like C1-type domain; the sequence is PKAHVTHHSI…QHEGLQEPLT (87 aa). A connecting peptide region spans residues 302-310; that stretch reads EPPQTSFLI. The chain crosses the membrane as a helical span at residues 311-331; that stretch reads MGIIVGLVLLVVALVAGAVIW. Residues 332 to 364 are Cytoplasmic-facing; it reads RKKRSGEKGRIYTQAASSDSAQGSDVSLTVPKV. Phosphoserine is present on residues serine 355 and serine 358.

Belongs to the MHC class I family. Heterodimer of an alpha chain and a beta chain (beta-2-microglobulin).

It localises to the membrane. Functionally, involved in the presentation of foreign antigens to the immune system. The chain is BOLA class I histocompatibility antigen, alpha chain BL3-7 from Bos taurus (Bovine).